The chain runs to 653 residues: DNA-directed RNA polymerase III subunit RPC-3 (653 aa).

3 disordered regions span residues 141 to 186 (INGV…DSDP), 280 to 309 (DSSA…DFSD), and 422 to 442 (IKED…KRRG). Positions 159–170 (AENHTDHAHDYQ) are enriched in basic and acidic residues. 2 stretches are compositionally biased toward acidic residues: residues 293–309 (PLED…DFSD) and 424–433 (EDEDDEDEEG). Positions 580-601 (TYKSMSRCLQRIRVEREKLKFL) are leucine-zipper.

It belongs to the RNA polymerase beta chain family. In terms of assembly, component of the RNA polymerase III (Pol III) complex consisting of 17 subunits.

The protein localises to the nucleus. Functionally, DNA-dependent RNA polymerase catalyzes the transcription of DNA into RNA using the four ribonucleoside triphosphates as substrates. Specific core component of RNA polymerase III which synthesizes small RNAs, such as 5S rRNA and tRNAs. The protein is DNA-directed RNA polymerase III subunit RPC-3 (RPC-82) of Coccidioides immitis (strain RS) (Valley fever fungus).